A 308-amino-acid polypeptide reads, in one-letter code: MSTIDSPAIGTATINAVSVDCPAKTNLTLHVGPSHAEWGGRHELDTIYCAVGVYDTVTATRKAPGSGFSLNLEGAYLGDLASSGSDMRRNHAVLALFAMAEASSHEPDVALNIDKRIPVGAGMAGGSADAAATILALNTLWDLDWPIERLQEVAATLGADMPFCLTGGYARGTGFGERIEQLDDDGDIVRDLTERGFTGHLLVGAYRAELRTPEVYATFDQIGAGDGDENHLQKAAVSLHPRSGQAIEEALRAGASQAFVSGSGPSVIAFVPTEDAADAVQRAWQDSRCVDRIIATNAPARPIVHITA.

The active site involves Lys24. 118–128 provides a ligand contact to ATP; that stretch reads PVGAGMAGGSA. Asp160 is a catalytic residue.

This sequence belongs to the GHMP kinase family. IspE subfamily.

It carries out the reaction 4-CDP-2-C-methyl-D-erythritol + ATP = 4-CDP-2-C-methyl-D-erythritol 2-phosphate + ADP + H(+). It participates in isoprenoid biosynthesis; isopentenyl diphosphate biosynthesis via DXP pathway; isopentenyl diphosphate from 1-deoxy-D-xylulose 5-phosphate: step 3/6. Its function is as follows. Catalyzes the phosphorylation of the position 2 hydroxy group of 4-diphosphocytidyl-2C-methyl-D-erythritol. This Bifidobacterium adolescentis (strain ATCC 15703 / DSM 20083 / NCTC 11814 / E194a) protein is 4-diphosphocytidyl-2-C-methyl-D-erythritol kinase.